We begin with the raw amino-acid sequence, 693 residues long: Sodium-dependent phosphate transport protein 2B (693 aa).

The interval 1-46 (MAPWPELENSQPTSEKYTVKADGEQSAKPEKAKETEKDDTGTPITK) is disordered. Residues 1–89 (MAPWPELENS…KWSERDTKGK (89 aa)) are Cytoplasmic-facing. Over residues 17-40 (YTVKADGEQSAKPEKAKETEKDDT) the composition is skewed to basic and acidic residues. A helical transmembrane segment spans residues 90-110 (ILCVFQGIGKFILLLVFLYFF). Residues 111 to 135 (VCSLDVLSSAFQLVGGKVAGKFFNN) are Extracellular-facing. The chain crosses the membrane as a helical span at residues 136–156 (NSIMSNPLAGMVIGVLVTVLV). Residues 157-212 (QSSSTSTSIVVSMVASSLLPVHAAIPIIMGANIGTSITNTIVALMQAGDRKEFRRA) are Cytoplasmic-facing. Residues 213 to 233 (FAGATVHDFFNWLSVLVLLPL) traverse the membrane as a helical segment. The Extracellular portion of the chain corresponds to 234–361 (EAATGYLERL…IFVNFNLSDA (128 aa)). Cys302 and Cys349 are disulfide-bonded. 2 N-linked (GlcNAc...) asparagine glycosylation sites follow: Asn307 and Asn320. Residues 362-382 (IVGTILLITSLLILCTCLILI) form a helical membrane-spanning segment. The Cytoplasmic portion of the chain corresponds to 383–408 (VKLLGSVLRGQVAAVIKKTINTDFPY). A helical transmembrane segment spans residues 409–429 (PFSWVTGYLAILVGAGMTFIV). Topologically, residues 430 to 485 (QSSSVFTSAMTPLIGIGVISIQRAYPLTLGANIGTTTTAILAALASPGSTLKSSLQ) are extracellular. Residues 486 to 506 (IALCHFFFNISGIILWYPIPF) traverse the membrane as a helical segment. Topologically, residues 507–525 (TRLPIRLAKGLGNISSKYR) are cytoplasmic. A helical transmembrane segment spans residues 526–546 (WFAIVYLIVFFLLIPLAVFGL). The Extracellular segment spans residues 547-550 (SLIG). Residues 551-571 (WPVLVGVASPIVLVILLVVVL) traverse the membrane as a helical segment. Residues 572–693 (KILQSFCPGS…TKIVSSVTAL (122 aa)) are Cytoplasmic-facing.

The protein belongs to the SLC34A transporter family. In terms of processing, glycosylated.

The protein localises to the apical cell membrane. The enzyme catalyses 3 Na(+)(out) + phosphate(out) = 3 Na(+)(in) + phosphate(in). In terms of biological role, involved in actively transporting phosphate into cells via Na(+) cotransport. In Bos taurus (Bovine), this protein is Sodium-dependent phosphate transport protein 2B (SLC34A2).